An 866-amino-acid polypeptide reads, in one-letter code: Probable outer membrane usher protein ElfC (866 aa).

A signal peptide spans 1-35 (MYRTHRQHSLLSSGGVPSFIGGLVVFVSAAFNAQA).

It belongs to the fimbrial export usher family.

It localises to the cell outer membrane. Its function is as follows. Part of the elfADCG fimbrial operon, which could be required for adherence to host epithelial cells. Could be involved in the export and assembly of the ElfA fimbrial subunits across the outer membrane. This Escherichia coli O157:H7 protein is Probable outer membrane usher protein ElfC (elfC).